The primary structure comprises 246 residues: Tyrosine recombinase XerD-like (246 aa).

The Core-binding (CB) domain maps to 1-72 (MINDINNFIE…AVNQFLFFLY (72 aa)). Residues 84–246 (QETEKITLTQ…TPITLERYYR (163 aa)) enclose the Tyr recombinase domain. Catalysis depends on residues Lys149 and Arg212. Tyr244 functions as the O-(3'-phospho-DNA)-tyrosine intermediate in the catalytic mechanism.

This sequence belongs to the 'phage' integrase family. XerD-like subfamily.

It is found in the cytoplasm. Its function is as follows. Putative tyrosine recombinase. Not involved in the cutting and rejoining of the recombining DNA molecules on dif(SL) site. The chain is Tyrosine recombinase XerD-like from Streptococcus agalactiae serotype III (strain NEM316).